A 24-amino-acid chain; its full sequence is Small ribosomal subunit protein uS19 (24 aa).

Residues 1–24 (KLGEFSPTRTYRGHNKKDKKMQKK) are disordered. A compositionally biased stretch (basic residues) spans 11-24 (YRGHNKKDKKMQKK).

Belongs to the universal ribosomal protein uS19 family.

Protein S19 forms a complex with S13 that binds strongly to the 16S ribosomal RNA. In Phytoplasma sp. (strain STRAWB2), this protein is Small ribosomal subunit protein uS19.